The chain runs to 517 residues: Ascochitine biosynthesis cluster MFS transporter (517 aa).

Positions 1 to 12 (MSPDSRDPEAQR) are enriched in basic and acidic residues. A disordered region spans residues 1-45 (MSPDSRDPEAQRDVGLTKNTSSVNIPLESVKTDKTSNASPIMGPG). N-linked (GlcNAc...) asparagine glycosylation occurs at asparagine 19. The next 12 helical transmembrane spans lie at 75-95 (WVIT…STIF), 111-131 (VVMT…PLIW), 141-161 (LTPF…VGVA), 172-192 (FFIG…LADI), 204-224 (VYAA…GFVV), 232-252 (WTAW…LVFV), 308-328 (ILLL…LFFV), 347-367 (ALPL…ILFV), 390-410 (LMMV…WTSS), 421-441 (AGFP…SFLI), 457-475 (LIRS…PMYH), and 485-505 (LLGF…YYGP).

This sequence belongs to the major facilitator superfamily. CAR1 family.

The protein localises to the membrane. Functionally, MFS transporter; part of the gene cluster that mediates the biosynthesis the mycotoxin ascochitine, an o-quinone methide that plays a possible protective role against other microbial competitors in nature and is considered to be important for pathogenicity of legume-associated Didymella species. The sequence is that of Ascochitine biosynthesis cluster MFS transporter from Didymella fabae (Leaf and pod spot disease fungus).